A 298-amino-acid polypeptide reads, in one-letter code: Acetylglutamate kinase (298 aa).

Residues 69 to 70, R91, and N191 each bind substrate; that span reads GG.

This sequence belongs to the acetylglutamate kinase family. ArgB subfamily.

The protein localises to the cytoplasm. The enzyme catalyses N-acetyl-L-glutamate + ATP = N-acetyl-L-glutamyl 5-phosphate + ADP. The protein operates within amino-acid biosynthesis; L-arginine biosynthesis; N(2)-acetyl-L-ornithine from L-glutamate: step 2/4. Catalyzes the ATP-dependent phosphorylation of N-acetyl-L-glutamate. The protein is Acetylglutamate kinase of Neisseria gonorrhoeae (strain ATCC 700825 / FA 1090).